The primary structure comprises 428 residues: YTH domain-containing protein ECT1 (428 aa).

A YTH domain is found at 245-382 (AKFFVIKSYS…EHGTKIIKIF (138 aa)). RNA contacts are provided by residues 251–253 (KSY), D257, 267–268 (WS), N300, W324, W329, and W337.

As to quaternary structure, interacts (via C-terminus) with CIPK1. Expressed in root apex, shoot apex, lateral root primordia, stamens, carpels and trichomes.

It is found in the nucleus. The protein localises to the cytoplasm. Specifically recognizes and binds N6-methyladenosine (m6A)-containing RNAs, and regulates mRNA stability. M6A is a modification present at internal sites of mRNAs and some non-coding RNAs and plays a role in mRNA stability and processing. The polypeptide is YTH domain-containing protein ECT1 (Arabidopsis thaliana (Mouse-ear cress)).